Consider the following 118-residue polypeptide: DNA-binding protein MmarC6_0793 (118 aa).

Positions Met1–Gln12 are enriched in basic and acidic residues. Residues Met1–Gln33 form a disordered region. Positions Gln24–Gln33 are enriched in low complexity.

It belongs to the PDCD5 family.

This Methanococcus maripaludis (strain C6 / ATCC BAA-1332) protein is DNA-binding protein MmarC6_0793.